A 304-amino-acid chain; its full sequence is Serine protease 30 (304 aa).

An N-terminal signal peptide occupies residues 1-21 (MESWARCIFLLLLQILTGGRG). Positions 22 to 30 (DILHSGAGK) are cleaved as a propeptide — activation peptide. Positions 31-271 (IVGGQDAPEG…YVDWIQRTLA (241 aa)) constitute a Peptidase S1 domain. Residues Cys57 and Cys73 are joined by a disulfide bond. The Charge relay system role is filled by His72. The N-linked (GlcNAc...) asparagine glycan is linked to Asn79. Asp122 serves as the catalytic Charge relay system. Disulfide bonds link Cys155-Cys229, Cys185-Cys208, and Cys219-Cys247. Ser223 (charge relay system) is an active-site residue. Asn232 and Asn273 each carry an N-linked (GlcNAc...) asparagine glycan. A lipid anchor (GPI-anchor amidated serine) is attached at Ser275. Positions 276-304 (DAYGCRSRASGAYPALLLVLLAFALPESL) are cleaved as a propeptide — removed in mature form.

The protein belongs to the peptidase S1 family. Expressed predominantly in kidney, small intestine and stomach and moderately in thymus, lung, spleen, testis and skin. In the kidney, expressed mainly in collecting duct of renal medulla and cortex.

The protein localises to the cell membrane. With respect to regulation, inhibited by aprotinin, leupeptin, benzamidine and soybean trypsin inhibitor. Partially inhibited by PMSF and DFP. Selectively cleaves synthetic peptide substrates of trypsin. Activates the epithelial sodium channel ENaC. The chain is Serine protease 30 (Prss30) from Rattus norvegicus (Rat).